We begin with the raw amino-acid sequence, 187 residues long: Adenine phosphoribosyltransferase (187 aa).

It belongs to the purine/pyrimidine phosphoribosyltransferase family. Homodimer.

The protein resides in the cytoplasm. It catalyses the reaction AMP + diphosphate = 5-phospho-alpha-D-ribose 1-diphosphate + adenine. The protein operates within purine metabolism; AMP biosynthesis via salvage pathway; AMP from adenine: step 1/1. Its function is as follows. Catalyzes a salvage reaction resulting in the formation of AMP, that is energically less costly than de novo synthesis. This chain is Adenine phosphoribosyltransferase, found in Yersinia pseudotuberculosis serotype I (strain IP32953).